The sequence spans 51 residues: MTFHLGWTILWYNQAYLEVWATVFQDEMHKYSLHPQSRDAKTKFCCCIPFK.

This is an uncharacterized protein from Saccharomyces cerevisiae (strain ATCC 204508 / S288c) (Baker's yeast).